Here is a 412-residue protein sequence, read N- to C-terminus: Subtilisin-like protease 6 (412 aa).

An N-terminal signal peptide occupies residues 1–20 (MGFITKAIPIVLAALSTVNG). Positions 21–126 (AKILEAGPHA…VVRTSTNGTN (106 aa)) are excised as a propeptide. Residues 36 to 120 (KYIVVMKREV…YIEPDFVVRT (85 aa)) form the Inhibitor I9 domain. Residues asparagine 123 and asparagine 126 are each glycosylated (N-linked (GlcNAc...) asparagine). A Peptidase S8 domain is found at 135 to 412 (SWGLARVSSK…SKLIYNGSGK (278 aa)). Residues aspartate 167 and histidine 198 each act as charge relay system in the active site. 2 N-linked (GlcNAc...) asparagine glycosylation sites follow: asparagine 252 and asparagine 264. Residue serine 358 is the Charge relay system of the active site. Asparagine 408 is a glycosylation site (N-linked (GlcNAc...) asparagine).

The protein belongs to the peptidase S8 family.

Its subcellular location is the secreted. Secreted subtilisin-like serine protease with keratinolytic activity that contributes to pathogenicity. In Trichophyton equinum (Horse ringworm fungus), this protein is Subtilisin-like protease 6 (SUB6).